A 450-amino-acid polypeptide reads, in one-letter code: Signal recognition particle protein (450 aa).

GTP contacts are provided by residues 107–114 (GLQGSGKT), 190–194 (DTAGR), and 248–251 (TKTD).

The protein belongs to the GTP-binding SRP family. SRP54 subfamily. As to quaternary structure, part of the signal recognition particle protein translocation system, which is composed of SRP and FtsY. SRP is a ribonucleoprotein composed of Ffh and a 4.5S RNA molecule.

Its subcellular location is the cytoplasm. The catalysed reaction is GTP + H2O = GDP + phosphate + H(+). Functionally, involved in targeting and insertion of nascent membrane proteins into the cytoplasmic membrane. Binds to the hydrophobic signal sequence of the ribosome-nascent chain (RNC) as it emerges from the ribosomes. The SRP-RNC complex is then targeted to the cytoplasmic membrane where it interacts with the SRP receptor FtsY. Interaction with FtsY leads to the transfer of the RNC complex to the Sec translocase for insertion into the membrane, the hydrolysis of GTP by both Ffh and FtsY, and the dissociation of the SRP-FtsY complex into the individual components. The protein is Signal recognition particle protein of Buchnera aphidicola subsp. Baizongia pistaciae (strain Bp).